The primary structure comprises 718 residues: DNA ligase (718 aa).

NAD(+) is bound by residues 44–48 (DADYD), 93–94 (SL), and Glu127. Lys129 (N6-AMP-lysine intermediate) is an active-site residue. Residues Arg150, Glu186, Lys302, and Lys326 each coordinate NAD(+). Zn(2+) is bound by residues Cys432, Cys435, Cys456, and Cys462. Positions 640–718 (TAGSPVAGKT…EDEWLALISG (79 aa)) constitute a BRCT domain.

This sequence belongs to the NAD-dependent DNA ligase family. LigA subfamily. Mg(2+) serves as cofactor. Requires Mn(2+) as cofactor.

It catalyses the reaction NAD(+) + (deoxyribonucleotide)n-3'-hydroxyl + 5'-phospho-(deoxyribonucleotide)m = (deoxyribonucleotide)n+m + AMP + beta-nicotinamide D-nucleotide.. In terms of biological role, DNA ligase that catalyzes the formation of phosphodiester linkages between 5'-phosphoryl and 3'-hydroxyl groups in double-stranded DNA using NAD as a coenzyme and as the energy source for the reaction. It is essential for DNA replication and repair of damaged DNA. The polypeptide is DNA ligase (Rhizobium etli (strain ATCC 51251 / DSM 11541 / JCM 21823 / NBRC 15573 / CFN 42)).